The primary structure comprises 54 residues: Hydrophobic protein RCI2A (54 aa).

The next 2 membrane-spanning stretches (helical) occupy residues 2–22 and 32–52; these read STAT…GVFL and ICLV…IYVL.

The protein belongs to the UPF0057 (PMP3) family.

It is found in the membrane. The sequence is that of Hydrophobic protein RCI2A (RCI2A) from Arabidopsis thaliana (Mouse-ear cress).